The primary structure comprises 478 residues: Sodium-dependent phosphate transport protein 3 (478 aa).

Residues Asn28, Asn47, Asn56, and Asn69 are each glycosylated (N-linked (GlcNAc...) asparagine). The next 10 helical transmembrane spans lie at Ile98 to Ala118, Ser130 to Ile150, Ser183 to Ile203, Phe211 to Ile231, Leu273 to Ile293, Leu317 to Leu337, Leu341 to Leu361, Ala363 to Ile383, Tyr405 to Ser425, and Asn442 to Gly462.

Belongs to the major facilitator superfamily. Sodium/anion cotransporter family. Expressed in the liver, kidney, placenta, lung and thyroid (at protein level).

It is found in the apical cell membrane. The catalysed reaction is 3 Na(+)(out) + phosphate(out) = 3 Na(+)(in) + phosphate(in). It carries out the reaction urate(out) + n chloride(in) = urate(in) + n chloride(out). Its function is as follows. Acts as a membrane potential-dependent organic anion transporter, the transport requires a low concentration of chloride ions. Mediates chloride-dependent transport of urate. Can actively transport inorganic phosphate into cells via Na(+) cotransport. This is Sodium-dependent phosphate transport protein 3 (Slc17a2) from Mus musculus (Mouse).